Consider the following 349-residue polypeptide: Protein FAM98C (349 aa).

The interval 313-349 is disordered; it reads PDRGGRPNELEPPMPTWRSRREDGGPQCWGRKKKKKK.

The protein belongs to the FAM98 family.

The polypeptide is Protein FAM98C (FAM98C) (Homo sapiens (Human)).